A 372-amino-acid polypeptide reads, in one-letter code: MDMRTSFLCVTYVILLTGSACGLQITSTGQTSIEKASGESVKLDCQFTLASDDSGPLDIEWSLQPSDNQKEEKVVIVYSGDRAFEHYYDPLKGRVHFNSPDPKNGDASMNIMGLKATDTGTYQCKIKKVPGIASRKYLLTVMVRPSKPKCSAEGQTYVGKNMVLKCSSVEGTQPMEYIWERTSGNKLLPPLAILDKVTGTMTLKNATGDASGTYRCQAKNRVGTEECVVEVTITQPPNTAGIIAGVIICILLLLILLALILFCCCRARHKKKYEKEIAYEIREDVPPPKSRVSTARSFTSVGSQRSSLGSMSPSNLHEYSKPQYDKIPSEEYDRPPSHAPIPPPSRMAGPNLSRMGAIPVMIPAQNKDGSIV.

The signal sequence occupies residues 1-22; sequence MDMRTSFLCVTYVILLTGSACG. Ig-like C2-type domains are found at residues 23–140 and 130–234; these read LQIT…YLLT and PGIA…VTIT. Residues 23 to 241 are Extracellular-facing; that stretch reads LQITSTGQTS…TITQPPNTAG (219 aa). Cystine bridges form between cysteine 45–cysteine 124, cysteine 150–cysteine 227, and cysteine 166–cysteine 216. N-linked (GlcNAc...) asparagine glycosylation is present at asparagine 205. A helical membrane pass occupies residues 242-262; sequence IIAGVIICILLLLILLALILF. Topologically, residues 263-372 are cytoplasmic; sequence CCCRARHKKK…PAQNKDGSIV (110 aa). Residues 286 to 352 are disordered; the sequence is PPPKSRVSTA…PPSRMAGPNL (67 aa). Positions 291–317 are enriched in polar residues; that stretch reads RVSTARSFTSVGSQRSSLGSMSPSNLH. Over residues 318–336 the composition is skewed to basic and acidic residues; the sequence is EYSKPQYDKIPSEEYDRPP.

As to quaternary structure, monomer. Probably homodimer formed by 2 molecules on adjacent cells.

Its subcellular location is the cell membrane. The protein resides in the basolateral cell membrane. The protein localises to the cell junction. It localises to the tight junction. It is found in the adherens junction. Functionally, may function as a homophilic cell adhesion molecule and be essential for tight junction integrity. May also be involved in transepithelial migration of leukocytes through adhesive interactions with jaml. The interaction between both receptors may also mediate the activation of gamma-delta T-cells, a subpopulation of T-cells residing in epithelia and involved in tissue homeostasis and repair. This Danio rerio (Zebrafish) protein is Coxsackievirus and adenovirus receptor homolog (cxadr).